The following is a 202-amino-acid chain: LexA repressor 2 (202 aa).

The H-T-H motif DNA-binding region spans 28–48 (LADIATRFGFASRSVARKHIT). Catalysis depends on for autocatalytic cleavage activity residues Ser-123 and Lys-160.

Belongs to the peptidase S24 family. In terms of assembly, homodimer.

It catalyses the reaction Hydrolysis of Ala-|-Gly bond in repressor LexA.. Its function is as follows. Represses a number of genes involved in the response to DNA damage (SOS response), including recA and lexA. In the presence of single-stranded DNA, RecA interacts with LexA causing an autocatalytic cleavage which disrupts the DNA-binding part of LexA, leading to derepression of the SOS regulon and eventually DNA repair. The protein is LexA repressor 2 of Pseudomonas putida (strain ATCC 47054 / DSM 6125 / CFBP 8728 / NCIMB 11950 / KT2440).